Here is a 480-residue protein sequence, read N- to C-terminus: ATP synthase subunit beta, chloroplastic (480 aa).

161–168 contributes to the ATP binding site; it reads GGAGVGKT.

It belongs to the ATPase alpha/beta chains family. As to quaternary structure, F-type ATPases have 2 components, CF(1) - the catalytic core - and CF(0) - the membrane proton channel. CF(1) has five subunits: alpha(3), beta(3), gamma(1), delta(1), epsilon(1). CF(0) has four main subunits: a(1), b(1), b'(1) and c(9-12).

Its subcellular location is the plastid. It is found in the chloroplast thylakoid membrane. It carries out the reaction ATP + H2O + 4 H(+)(in) = ADP + phosphate + 5 H(+)(out). In terms of biological role, produces ATP from ADP in the presence of a proton gradient across the membrane. The catalytic sites are hosted primarily by the beta subunits. The protein is ATP synthase subunit beta, chloroplastic of Tetradesmus obliquus (Green alga).